The sequence spans 1178 residues: MDNNPNINECIPYNCLSNPEVEVLGGERIETGYTPIDISLSLTQFLLSEFVPGAGFVLGLVDIIWGIFGPSQWDAFLVQIEQLINQRIEEFARNQAISRLEGLSNLYQIYAESFREWEADPTNPALREEMRIQFNDMNSALTTAIPLFAVQNYQVPLLSVYVQAANLHLSVLRDVSVFGQRWGFDAATINSRYNDLTRLIGNYTDYAVRWYNTGLERVWGPDSRDWVRYNQFRRELTLTVLDIVALFPNYDSRRYPIRTVSQLTREIYTNPVLENFDGSFRGSAQGIERSIRSPHLMDILNSITIYTDAHRGYYYWSGHQIMASPVGFSGPEFTFPLYGTMGNAAPQQRIVAQLGQGVYRTLSSTLYRRPFNIGINNQQLSVLDGTEFAYGTSSNLPSAVYRKSGTVDSLDEIPPQNNNVPPRQGFSHRLSHVSMFRSGFSNSSVSIIRAPMFSWIHRSAEFNNIIASDSITQIPAVKGNFLFNGSVISGPGFTGGDLVRLNSSGNNIQNRGYIEVPIHFPSTSTRYRVRVRYASVTPIHLNVNWGNSSIFSNTVPATATSLDNLQSSDFGYFESANAFTSSLGNIVGVRNFSGTAGVIIDRFEFIPVTATLEAEYNLERAQKAVNALFTSTNQLGLKTNVTDYHIDQVSNLVTYLSDEFCLDEKRELSEKVKHAKRLSDERNLLQDSNFKDINRQPERGWGGSTGITIQGGDDVFKENYVTLSGTFDECYPTYLYQKIDESKLKAFTRYQLRGYIEDSQDLEIYLIRYNAKHETVNVPGTGSLWPLSAQSPIGKCGEPNRCAPHLEWNPDLDCSCRDGEKCAHHSHHFSLDIDVGCTDLNEDLGVWVIFKIKTQDGHARLGNLEFLEEKPLVGEALARVKRAEKKWRDKREKLEWETNIVYKEAKESVDALFVNSQYDQLQADTNIAMIHAADKRVHSIREAYLPELSVIPGVNAAIFEELEGRIFTAFSLYDARNVIKNGDFNNGLSCWNVKGHVDVEEQNNQRSVLVVPEWEAEVSQEVRVCPGRGYILRVTAYKEGYGEGCVTIHEIENNTDELKFSNCVEEEIYPNNTVTCNDYTVNQEEYGGAYTSRNRGYNEAPSVPADYASVYEEKSYTDGRRENPCEFNRGYRDYTPLPVGYVTKELEYFPETDKVWIEIGETEGTFIVDSVELLLMEE.

Belongs to the delta endotoxin family.

Functionally, promotes colloidosmotic lysis by binding to the midgut epithelial cells of many lepidopteran larvae. This is Pesticidal crystal protein Cry1Ac (cry1Ac) from Bacillus thuringiensis subsp. kurstaki.